Consider the following 188-residue polypeptide: Ribosome maturation factor RimM (188 aa).

Residues 98–174 (EGTFYYHDLR…HLTADAPAGL (77 aa)) form the PRC barrel domain. The interval 169–188 (DAPAGLIGPEPGEEDGAAES) is disordered. Positions 179 to 188 (PGEEDGAAES) are enriched in acidic residues.

The protein belongs to the RimM family. In terms of assembly, binds ribosomal protein uS19.

It localises to the cytoplasm. Its function is as follows. An accessory protein needed during the final step in the assembly of 30S ribosomal subunit, possibly for assembly of the head region. Essential for efficient processing of 16S rRNA. May be needed both before and after RbfA during the maturation of 16S rRNA. It has affinity for free ribosomal 30S subunits but not for 70S ribosomes. This Deinococcus radiodurans (strain ATCC 13939 / DSM 20539 / JCM 16871 / CCUG 27074 / LMG 4051 / NBRC 15346 / NCIMB 9279 / VKM B-1422 / R1) protein is Ribosome maturation factor RimM.